We begin with the raw amino-acid sequence, 383 residues long: Cytochrome b (383 aa).

4 helical membrane passes run 32 to 52 (VGSL…FLAM), 76 to 98 (WLMR…LHMG), 113 to 133 (VWSM…MGYC), and 179 to 199 (FFAL…MHFM). Positions 82 and 96 each coordinate heme b. Heme b is bound by residues His-183 and His-197. Residue His-202 coordinates a ubiquinone. The next 4 helical transmembrane spans lie at 225-245 (FVFK…LFVF), 289-309 (LGGV…PMTD), 321-341 (LSKL…NMGQ), and 348-368 (FIEL…MLVP).

Belongs to the cytochrome b family. In terms of assembly, fungal cytochrome b-c1 complex contains 10 subunits; 3 respiratory subunits, 2 core proteins and 5 low-molecular weight proteins. Cytochrome b-c1 complex is a homodimer. The cofactor is heme b.

The protein localises to the mitochondrion inner membrane. In terms of biological role, component of the ubiquinol-cytochrome c reductase complex (complex III or cytochrome b-c1 complex) that is part of the mitochondrial respiratory chain. The b-c1 complex mediates electron transfer from ubiquinol to cytochrome c. Contributes to the generation of a proton gradient across the mitochondrial membrane that is then used for ATP synthesis. The protein is Cytochrome b (COB) of Debaryomyces hansenii (strain ATCC 36239 / CBS 767 / BCRC 21394 / JCM 1990 / NBRC 0083 / IGC 2968) (Yeast).